We begin with the raw amino-acid sequence, 444 residues long: Acetyl-CoA--deacetylcephalosporin C acetyltransferase (444 aa).

Residues 1-71 (MLPSAQVARL…PQIANRFEAS (71 aa)) constitute a propeptide that is removed on maturation. Residues 112-425 (VIVCHTLTSS…DTNEGHDFFV (314 aa)) enclose the AB hydrolase-1 domain. Active-site residues include Ser208 and His421.

Belongs to the AB hydrolase superfamily. MetX family. In terms of assembly, heterodimer of chain I and chain II.

It carries out the reaction deacetylcephalosporin C + acetyl-CoA = cephalosporin C + CoA. Its pathway is antibiotic biosynthesis; cephalosporin C biosynthesis. Catalyzes the conversion of deacetylcephalosporin C to cephalosporin C. This is Acetyl-CoA--deacetylcephalosporin C acetyltransferase (CEFG) from Hapsidospora chrysogena (Acremonium chrysogenum).